Reading from the N-terminus, the 558-residue chain is uncharacterized protein (558 aa).

Helical transmembrane passes span 15-32 (PSVTQTIIILSLVCALGL), 39-61 (IGTISLGITFVFFVGILASHFGV), 76-95 (LVIFVYALGLQVGPSFFPSL), 104-126 (LISLGLVLLTFLLCILLYYILGI), and 166-188 (MALACAVTYPLGVVGVIIALALL). RCK C-terminal domains are found at residues 196 to 278 (EERD…LFGK) and 286 to 370 (RPDI…ILGD). The next 5 membrane-spanning stretches (helical) occupy residues 383–405 (LFGGLVLGCVFGMIPFYLPGVSM), 409–426 (LGLAGGPIIIGILMGAFG), 446–468 (FGIILYLGGLGLASGANFFDTII), 473–495 (LLWVGAGFLITMLPTLLVGWASI), and 533–555 (VVYATVYPLSMFVRIIFAQIMIL).

Belongs to the AAE transporter (TC 2.A.81) family.

The protein localises to the cell membrane. This is an uncharacterized protein from Porphyromonas gingivalis (strain ATCC BAA-308 / W83).